Here is a 209-residue protein sequence, read N- to C-terminus: uncharacterized protein (209 aa).

This is an uncharacterized protein from Acanthamoeba polyphaga mimivirus (APMV).